The chain runs to 128 residues: Small ribosomal subunit protein bS6 (128 aa).

It belongs to the bacterial ribosomal protein bS6 family.

In terms of biological role, binds together with bS18 to 16S ribosomal RNA. The protein is Small ribosomal subunit protein bS6 of Thermotoga sp. (strain RQ2).